A 325-amino-acid polypeptide reads, in one-letter code: Mitochondrial amidoxime-reducing component 1 (325 aa).

The Mitochondrial matrix portion of the chain corresponds to 1–16 (MDLKEAFATIFDQNRK). A helical; Signal-anchor for type II membrane protein membrane pass occupies residues 17–36 (VALYAAGTTVAVLGLGLVFK). Topologically, residues 37-325 (YMRREEKLTR…VGEPVYKITY (289 aa)) are cytoplasmic. Mo-molybdopterin contacts are provided by Lys-59, Ser-60, and Arg-84. Residues 85 to 175 (HWLVITEDGH…ADKPVRLVHY (91 aa)) are MOSC N-terminal region. Positions 179-323 (LKPQRPHEKE…LHVGEPVYKI (145 aa)) constitute an MOSC domain. 4 residues coordinate Mo-molybdopterin: Arg-230, Arg-264, Cys-265, and Tyr-305.

Requires Mo-molybdopterin as cofactor.

The protein resides in the mitochondrion outer membrane. It localises to the membrane. It carries out the reaction N(omega)-hydroxy-L-arginine + 2 Fe(II)-[cytochrome b5] + 2 H(+) = L-arginine + 2 Fe(III)-[cytochrome b5] + H2O. Functionally, catalyzes the reduction of N-oxygenated molecules, acting as a counterpart of cytochrome P450 and flavin-containing monooxygenases in metabolic cycles. As a component of prodrug-converting system, reduces a multitude of N-hydroxylated prodrugs particularly amidoximes, leading to increased drug bioavailability. May be involved in mitochondrial N(omega)-hydroxy-L-arginine (NOHA) reduction, regulating endogenous nitric oxide levels and biosynthesis. Postulated to cleave the N-OH bond of N-hydroxylated substrates in concert with electron transfer from NADH to cytochrome b5 reductase then to cytochrome b5, the ultimate electron donor that primes the active site for substrate reduction. The protein is Mitochondrial amidoxime-reducing component 1 (mtarc1) of Danio rerio (Zebrafish).